Here is a 268-residue protein sequence, read N- to C-terminus: MPSRNDTYDDKALSLPRILCLHGGGTNARIFESQCRVISAHLKPYFRLVFAEAPYESAPGPGVTSVYADYAPFKRWLPWLPEDEHASNEEVVHDIDQAIEEAIMSDDKKGASGPWVALLGFSQGAKLVMSLLIRQDVRRSRHAPPIAGPHWAFGVILAGRAPPVALDAGFFNSTMLCEPSQLDIVRPPDMIDAMSEDHRVRVPTIHMQGLFDQGLHLHREMLEDYCIEGTTRLIEWNAAHVVALKRSDVDVLITHILEVARETGVLRD.

Active-site charge relay system residues include S122, D212, and H240.

This sequence belongs to the LovG family.

It participates in secondary metabolite biosynthesis. In terms of biological role, esterase; part of the gene cluster that mediates the biosynthesis of dibenzodioxocinones such as pestalotiollide B, a novel class of inhibitors against cholesterol ester transfer protein (CEPT). The biosynthesis initiates from condensation of acetate and malonate units catalyzed by the non-reducing PKS pks8/GME11356. Pks8/GME11356 lacks a thioesterase (TE) domain, which is important to the cyclizing of the third ring of atrochrysone carboxylic acid, and the esterase GME11355 might play the role of TE and catalyzes the cyclization reaction of the C ring. The lactamase-like protein GME11357 (or other beta-lactamases in Pestalotiopsis microspora) probably hydrolyzes the thioester bond between the ACP of pks8/GME11356 and the intermediate to release atrochrysone carboxylic acid, which is spontaneously dehydrates to form endocrocin anthrone. Endocrocin anthrone is further converted to emodin via the endocrocin intermediate. Emodin is then oxidized by several enzymes such as the Baeyer-Villiger oxidase GME11358, the oxidoreductase GME11367, the short chain dehydrogenase/reductase GME11373, as well as by other oxidoreductases from the cluster, to modify the A and C rings and open the B ring, and finally yield monodictyphenone. The prenyltransferase GME11375 may catalyze the addition reaction between the C5 side chains and the carbon bone of dibenzodioxocinones. The remaining biochemical reactions to the final product dibenzodioxocinones should be methylation catalyzed by methyltransferase GME11366 and reduction and lactonization reaction catalyzed by a series of oxidordeuctases. This is Esterase GME11355 from Pestalotiopsis microspora.